A 75-amino-acid polypeptide reads, in one-letter code: uncharacterized protein (75 aa).

Residues 43–67 (CSECGLPIPTTRLRANPFAHRCVSC) form a dksA C4-type zinc finger.

This is an uncharacterized protein from Haemophilus influenzae (strain ATCC 51907 / DSM 11121 / KW20 / Rd).